The primary structure comprises 210 residues: Uridine kinase (210 aa).

Position 12–19 (12–19 (GGSGGGKT)) interacts with ATP.

Belongs to the uridine kinase family.

It localises to the cytoplasm. It catalyses the reaction uridine + ATP = UMP + ADP + H(+). The catalysed reaction is cytidine + ATP = CMP + ADP + H(+). It participates in pyrimidine metabolism; CTP biosynthesis via salvage pathway; CTP from cytidine: step 1/3. It functions in the pathway pyrimidine metabolism; UMP biosynthesis via salvage pathway; UMP from uridine: step 1/1. The protein is Uridine kinase of Streptococcus gordonii (strain Challis / ATCC 35105 / BCRC 15272 / CH1 / DL1 / V288).